The chain runs to 144 residues: Peptide methionine sulfoxide reductase B7 (144 aa).

The MsrB domain occupies 19-140 (DEEWRAVLSP…NSVSLKFSSA (122 aa)). Residues Cys58, Cys61, Cys104, and Cys107 each coordinate Zn(2+). A disulfide bridge links Cys76 with Cys129. Catalysis depends on Cys129, which acts as the Nucleophile.

Belongs to the MsrB Met sulfoxide reductase family. Requires Zn(2+) as cofactor.

It is found in the cytoplasm. Its subcellular location is the cytosol. The enzyme catalyses L-methionyl-[protein] + [thioredoxin]-disulfide + H2O = L-methionyl-(R)-S-oxide-[protein] + [thioredoxin]-dithiol. Functionally, catalyzes the reduction of methionine sulfoxide (MetSO) to methionine in proteins. Plays a protective role against oxidative stress by restoring activity to proteins that have been inactivated by methionine oxidation. MSRB family specifically reduces the MetSO R-enantiomer. The chain is Peptide methionine sulfoxide reductase B7 (MSRB7) from Arabidopsis thaliana (Mouse-ear cress).